The primary structure comprises 350 residues: UDP-rhamnose/UDP-galactose transporter 3 (350 aa).

10 helical membrane passes run 12 to 32, 41 to 61, 81 to 101, 104 to 124, 133 to 153, 160 to 180, 200 to 220, 224 to 244, 257 to 277, and 286 to 306; these read AVSDMGAWAMNVISSVGIIMA, GFAFSFATTLTGFHFALTALV, LIWFSIVANVSIAAMNFSLML, VGFYQISKLSMIPVVCVMEWI, EVKISVVVVVVGVGICTVTDV, FICACVAIFSSSLQQILIGSL, AFSLLVVGPLVDYLLSGKFIM, MSSGCFLFILLSCGLAVFCNI, SFQVIGHMKTVCILTLGWLLF, and VAGMIVAIVGMVIYSWAMELE.

The protein belongs to the TPT transporter family. TPT (TC 2.A.7.9) subfamily.

Its subcellular location is the golgi apparatus membrane. Its function is as follows. Nucleotide-sugar transporter that transports UDP-rhamnose or UDP-galactose and UMP in a strict counter-exchange mode. This is UDP-rhamnose/UDP-galactose transporter 3 from Arabidopsis thaliana (Mouse-ear cress).